We begin with the raw amino-acid sequence, 721 residues long: Cell wall protein RBT1 (721 aa).

Residues 1 to 20 (MRFATAQLAALAYYILSTEA) form the signal peptide. In terms of domain architecture, Flo11 spans 55-278 (GSKNKREAEI…DCQCDTPSPS (224 aa)). Disordered regions lie at residues 278-410 (STTT…LTTT), 453-510 (LTET…TVTE), and 555-666 (TPAT…ALVS). Positions 454-499 (TETTPVPSSVDSTSVTSAPETTPESTAPESSAPESSAPESSAPVTE) are enriched in low complexity. Polar residues predominate over residues 500 to 510 (TPTGPVSTVTE). 2 stretches are compositionally biased toward low complexity: residues 555 to 575 (TPAT…VPAT) and 584 to 663 (SSAP…KTSA). Residue Ser696 is the site of GPI-anchor amidated serine attachment. Residues 697–721 (SFEGAGNNMRLTYGAAIIGLAAFLI) constitute a propeptide, removed in mature form.

Belongs to the HWP1 family. Post-translationally, the GPI-anchor is attached to the protein in the endoplasmic reticulum and serves to target the protein to the cell surface. There, the glucosamine-inositol phospholipid moiety is cleaved off and the GPI-modified mannoprotein is covalently attached via its lipidless GPI glycan remnant to the 1,6-beta-glucan of the outer cell wall layer.

It is found in the secreted. It localises to the cell wall. The protein localises to the membrane. In terms of biological role, GPI-anchored cell wall protein required for mating efficiency, biofilm formation, and virulence. Involved in normal disseminated infection, but not in intestinal colonization. The polypeptide is Cell wall protein RBT1 (RBT1) (Candida albicans (strain SC5314 / ATCC MYA-2876) (Yeast)).